The sequence spans 193 residues: Ion-translocating oxidoreductase complex subunit A (193 aa).

6 consecutive transmembrane segments (helical) span residues 5–25 (LLLL…FLGL), 39–59 (IGMG…SYLM), 63–83 (ILIP…VIAV), 102–122 (LLGI…VALL), 134–154 (IIYG…FAAM), and 171–191 (SIAM…TGLI).

It belongs to the NqrDE/RnfAE family. As to quaternary structure, the complex is composed of six subunits: RnfA, RnfB, RnfC, RnfD, RnfE and RnfG.

It is found in the cell inner membrane. Functionally, part of a membrane-bound complex that couples electron transfer with translocation of ions across the membrane. This chain is Ion-translocating oxidoreductase complex subunit A, found in Aeromonas hydrophila subsp. hydrophila (strain ATCC 7966 / DSM 30187 / BCRC 13018 / CCUG 14551 / JCM 1027 / KCTC 2358 / NCIMB 9240 / NCTC 8049).